We begin with the raw amino-acid sequence, 1274 residues long: Mediator of RNA polymerase II transcription subunit 14 (1274 aa).

Disordered stretches follow at residues 1–40, 1056–1142, and 1155–1274; these read MENG…KAHA, LVGT…LHTQ, and AQRQ…VVID. The span at 27-37 shows a compositional bias: basic and acidic residues; that stretch reads AKREGSPDKGK. The segment covering 1075 to 1085 has biased composition (polar residues); the sequence is QDLQQGPQKTP. A compositionally biased stretch (low complexity) spans 1090-1104; the sequence is AAQAAQAAQAAQAAQ. The segment covering 1108 to 1119 has biased composition (pro residues); that stretch reads PQRPKQQPPTPS. Composition is skewed to low complexity over residues 1120–1142, 1155–1172, and 1183–1252; these read QPQQ…LHTQ, AQRQ…NNNT, and PQQR…PQGQ. A compositionally biased stretch (gly residues) spans 1253–1265; the sequence is PGHGGGANGGMGG.

Belongs to the Mediator complex subunit 14 family. Component of the Mediator complex.

The protein resides in the nucleus. Functionally, component of the Mediator complex, a coactivator involved in the regulated transcription of nearly all RNA polymerase II-dependent genes. Mediator functions as a bridge to convey information from gene-specific regulatory proteins to the basal RNA polymerase II transcription machinery. Mediator is recruited to promoters by direct interactions with regulatory proteins and serves as a scaffold for the assembly of a functional preinitiation complex with RNA polymerase II and the general transcription factors. The polypeptide is Mediator of RNA polymerase II transcription subunit 14 (rgr1) (Neurospora crassa (strain ATCC 24698 / 74-OR23-1A / CBS 708.71 / DSM 1257 / FGSC 987)).